The chain runs to 173 residues: Thiol-disulfide oxidoreductase ResA (173 aa).

A helical; Signal-anchor for type II membrane protein membrane pass occupies residues 10-29; it reads VIILLILCGAVGFTLYQGFF. In terms of domain architecture, Thioredoxin spans 35–173; it reads MQIGKEAPNF…LEGYLQKITP (139 aa). An intrachain disulfide couples cysteine 73 to cysteine 76.

This sequence belongs to the thioredoxin family. ResA subfamily.

Its subcellular location is the cell membrane. The protein operates within protein modification; cytochrome c assembly. In terms of biological role, thiol-disulfide oxidoreductase which is required in disulfide reduction during c-type cytochrome synthesis. May accept reducing equivalents from CcdA, leading to breakage of disulfide bonds in apocytochrome c; following this reduction heme can be covalently attached. This is Thiol-disulfide oxidoreductase ResA from Bacillus cereus (strain ZK / E33L).